A 294-amino-acid chain; its full sequence is Bifunctional protein FolD (294 aa).

NADP(+) is bound by residues 176–178 (GAS), Ser201, and Ile242.

This sequence belongs to the tetrahydrofolate dehydrogenase/cyclohydrolase family. Homodimer.

It carries out the reaction (6R)-5,10-methylene-5,6,7,8-tetrahydrofolate + NADP(+) = (6R)-5,10-methenyltetrahydrofolate + NADPH. The catalysed reaction is (6R)-5,10-methenyltetrahydrofolate + H2O = (6R)-10-formyltetrahydrofolate + H(+). It functions in the pathway one-carbon metabolism; tetrahydrofolate interconversion. In terms of biological role, catalyzes the oxidation of 5,10-methylenetetrahydrofolate to 5,10-methenyltetrahydrofolate and then the hydrolysis of 5,10-methenyltetrahydrofolate to 10-formyltetrahydrofolate. The protein is Bifunctional protein FolD of Bordetella petrii (strain ATCC BAA-461 / DSM 12804 / CCUG 43448).